The primary structure comprises 210 residues: ATP-dependent Clp protease proteolytic subunit (210 aa).

Serine 107 serves as the catalytic Nucleophile. The active site involves histidine 132.

This sequence belongs to the peptidase S14 family. Fourteen ClpP subunits assemble into 2 heptameric rings which stack back to back to give a disk-like structure with a central cavity, resembling the structure of eukaryotic proteasomes.

The protein localises to the cytoplasm. The catalysed reaction is Hydrolysis of proteins to small peptides in the presence of ATP and magnesium. alpha-casein is the usual test substrate. In the absence of ATP, only oligopeptides shorter than five residues are hydrolyzed (such as succinyl-Leu-Tyr-|-NHMec, and Leu-Tyr-Leu-|-Tyr-Trp, in which cleavage of the -Tyr-|-Leu- and -Tyr-|-Trp bonds also occurs).. Functionally, cleaves peptides in various proteins in a process that requires ATP hydrolysis. Has a chymotrypsin-like activity. Plays a major role in the degradation of misfolded proteins. The sequence is that of ATP-dependent Clp protease proteolytic subunit from Chromobacterium violaceum (strain ATCC 12472 / DSM 30191 / JCM 1249 / CCUG 213 / NBRC 12614 / NCIMB 9131 / NCTC 9757 / MK).